A 388-amino-acid chain; its full sequence is 4-hydroxy-tetrahydrodipicolinate synthase 1, chloroplastic (388 aa).

The disordered stretch occupies residues 1–51 (MPYLQPPRPHPHPHPTSRLSRASPPSPFPFFPAGTSRSGRLQPVPVSGHSA). A chloroplast-targeting transit peptide spans 1–62 (MPYLQPPRPH…RVSKGKFAVA (62 aa)). Thr-131 is a binding site for pyruvate. The Proton donor/acceptor role is filled by Tyr-217. Lys-245 acts as the Schiff-base intermediate with substrate in catalysis. Ile-284 lines the pyruvate pocket.

This sequence belongs to the DapA family. As to quaternary structure, tetramer of modified subunits derived from two genes in different combinations.

Its subcellular location is the plastid. It localises to the chloroplast. It carries out the reaction L-aspartate 4-semialdehyde + pyruvate = (2S,4S)-4-hydroxy-2,3,4,5-tetrahydrodipicolinate + H2O + H(+). It participates in amino-acid biosynthesis; L-lysine biosynthesis via DAP pathway; (S)-tetrahydrodipicolinate from L-aspartate: step 3/4. With respect to regulation, sensitive to lysine inhibition. This inhibition increase in an allosteric manner with increasing concentration of the inhibitor. Functionally, catalyzes the condensation of (S)-aspartate-beta-semialdehyde [(S)-ASA] and pyruvate to 4-hydroxy-tetrahydrodipicolinate (HTPA). This is 4-hydroxy-tetrahydrodipicolinate synthase 1, chloroplastic from Triticum aestivum (Wheat).